We begin with the raw amino-acid sequence, 646 residues long: uncharacterized protein (646 aa).

Transmembrane regions (helical) follow at residues Ala-20–Phe-40, Leu-54–Ile-74, Leu-115–Ile-135, Ala-154–Leu-174, Thr-203–Ile-223, Ile-232–Phe-252, Leu-285–Phe-305, Gly-523–Gly-543, Ile-582–Ala-602, and Phe-613–Val-633.

It belongs to the ABC-4 integral membrane protein family.

It localises to the cell membrane. This is an uncharacterized protein from Bacillus subtilis (strain 168).